A 423-amino-acid polypeptide reads, in one-letter code: G protein-activated inward rectifier potassium channel 2 (423 aa).

At 1 to 89 the chain is on the cytoplasmic side; sequence MAKLTESMTN…IFTTLVDLKW (89 aa). Ser-16 and Ser-23 each carry phosphoserine. The chain crosses the membrane as a helical span at residues 90–114; sequence RFNLLIFVMVYTVTWLFFGMIWWLI. The Extracellular segment spans residues 115-138; sequence AYIRGDMDHIEDPSWTPCVTNLNG. Positions 139–150 form an intramembrane region, helical; Pore-forming; that stretch reads FVSAFLFSIETE. The segment at residues 151 to 157 is an intramembrane region (pore-forming); that stretch reads TTIGYGY. A Selectivity filter motif is present at residues 152–157; sequence TIGYGY. The Extracellular portion of the chain corresponds to 158–166; it reads RVITDKCPE. A helical membrane pass occupies residues 167–188; sequence GIILLLIQSVLGSIVNAFMVGC. Residues 189-423 are Cytoplasmic-facing; the sequence is MFVKISQPKK…VANLENESKV (235 aa). Residues 390–423 form a disordered region; sequence NQHAELETEEEEKNLEEQTERNGDVANLENESKV. The PDZ-binding signature appears at 420-423; sequence ESKV.

Belongs to the inward rectifier-type potassium channel (TC 1.A.2.1) family. KCNJ6 subfamily. Associates with KCNJ3/GIRK1 or KCNJ5/GRIK4 to form a G-protein-activated heteromultimer pore-forming unit. The resulting inward current is much larger. Interacts (via PDZ-binding motif) with SNX27 (via PDZ domain); the interaction is required when endocytosed to prevent degradation in lysosomes and promote recycling to the plasma membrane. Most abundant in cerebellum, and to a lesser degree in islets and exocrine pancreas.

The protein localises to the membrane. The enzyme catalyses K(+)(in) = K(+)(out). With respect to regulation, activated by phosphatidylinositol 4,5 biphosphate (PtdIns(4,5)P2). In terms of biological role, inward rectifier potassium channels are characterized by a greater tendency to allow potassium to flow into the cell rather than out of it. Their voltage dependence is regulated by the concentration of extracellular potassium; as external potassium is raised, the voltage range of the channel opening shifts to more positive voltages. The inward rectification is mainly due to the blockage of outward current by internal magnesium. This potassium channel may be involved in the regulation of insulin secretion by glucose and/or neurotransmitters acting through G-protein-coupled receptors. This is G protein-activated inward rectifier potassium channel 2 (KCNJ6) from Homo sapiens (Human).